Consider the following 142-residue polypeptide: Large ribosomal subunit protein uL13 (142 aa).

Belongs to the universal ribosomal protein uL13 family. Part of the 50S ribosomal subunit.

This protein is one of the early assembly proteins of the 50S ribosomal subunit, although it is not seen to bind rRNA by itself. It is important during the early stages of 50S assembly. The polypeptide is Large ribosomal subunit protein uL13 (Chromohalobacter salexigens (strain ATCC BAA-138 / DSM 3043 / CIP 106854 / NCIMB 13768 / 1H11)).